The chain runs to 172 residues: Small ribosomal subunit protein uS5 (172 aa).

One can recognise an S5 DRBM domain in the interval 16–79 (LKDRLVAINR…ESAKKNLTRV (64 aa)).

This sequence belongs to the universal ribosomal protein uS5 family. As to quaternary structure, part of the 30S ribosomal subunit. Contacts proteins S4 and S8.

With S4 and S12 plays an important role in translational accuracy. Its function is as follows. Located at the back of the 30S subunit body where it stabilizes the conformation of the head with respect to the body. The sequence is that of Small ribosomal subunit protein uS5 from Bacteroides fragilis (strain ATCC 25285 / DSM 2151 / CCUG 4856 / JCM 11019 / LMG 10263 / NCTC 9343 / Onslow / VPI 2553 / EN-2).